A 403-amino-acid chain; its full sequence is High affinity transport system protein p37 (403 aa).

The first 23 residues, 1 to 23, serve as a signal peptide directing secretion; it reads MLKKLKNFILFSSIFSPIAFAIS. Residue cysteine 24 is the site of N-palmitoyl cysteine attachment. The S-diacylglycerol cysteine moiety is linked to residue cysteine 24.

The protein localises to the cell membrane. P37 is part of a high-affinity transport system. The polypeptide is High affinity transport system protein p37 (p37) (Mesomycoplasma hyorhinis (Mycoplasma hyorhinis)).